We begin with the raw amino-acid sequence, 283 residues long: Elongation factor Ts (283 aa).

The involved in Mg(2+) ion dislocation from EF-Tu stretch occupies residues 79–82 (TDFV).

The protein belongs to the EF-Ts family.

It localises to the cytoplasm. Its function is as follows. Associates with the EF-Tu.GDP complex and induces the exchange of GDP to GTP. It remains bound to the aminoacyl-tRNA.EF-Tu.GTP complex up to the GTP hydrolysis stage on the ribosome. The chain is Elongation factor Ts from Shewanella sp. (strain ANA-3).